We begin with the raw amino-acid sequence, 343 residues long: MQLLTRANVSSSPSRRPESNALKQKCHGHSNADNSLSRSKSDVAIELTNVSKSYGDKVVVDQLSFTITSGECFGLLGPNGAGKSTVSRLVLGLAPPDEGTITVLGEPVPARARLARSRIGVVPQFDTLDREFTARENLLVFGRYFGLHTRELEEAIPPLLDFARLESKADVPVAQLSGGMQRRLTLACALINDPQLLILDEPTTGLDPHARHLIWERLRSLLALGKTILLTTHFMEEADRLCDRLCVIEHGRKIVEGRPHALIDEQIGCDVIEIYGGNPRELTSVVGPYAQRVEVSGETLFCYSSDPEQVRLQLRGRTGLRLLQRPPNLEDVFLRLTGREMKD.

The segment covering 1-14 has biased composition (polar residues); the sequence is MQLLTRANVSSSPS. Residues 1–38 are disordered; the sequence is MQLLTRANVSSSPSRRPESNALKQKCHGHSNADNSLSR. An ABC transporter domain is found at 45–275; it reads IELTNVSKSY…QIGCDVIEIY (231 aa). 77–84 contacts ATP; it reads GPNGAGKS.

This sequence belongs to the ABC transporter superfamily. Lipooligosaccharide exporter (TC 3.A.1.102) family. The complex is composed of two ATP-binding proteins (NodI) and two transmembrane proteins (NodJ).

It is found in the cell inner membrane. In terms of biological role, part of the ABC transporter complex NodIJ involved in the export of the nodulation factors (Nod factors), the bacterial signal molecules that induce symbiosis and subsequent nodulation induction. Nod factors are LCO (lipo-chitin oligosaccharide), a modified beta-1,4-linked N-acetylglucosamine oligosaccharide. This subunit is responsible for energy coupling to the transport system. This chain is Nod factor export ATP-binding protein I, found in Sinorhizobium fredii (strain NBRC 101917 / NGR234).